We begin with the raw amino-acid sequence, 385 residues long: Dual-specificity RNA methyltransferase RlmN (385 aa).

Catalysis depends on Glu-113, which acts as the Proton acceptor. The Radical SAM core domain maps to 120–352 (VGRAGALCVS…NRAGYASPIR (233 aa)). Cysteines 127 and 363 form a disulfide. Cys-134, Cys-138, and Cys-141 together coordinate [4Fe-4S] cluster. Residues 189 to 190 (GE), Ser-221, 243 to 245 (SLH), and Asn-320 each bind S-adenosyl-L-methionine. Cys-363 functions as the S-methylcysteine intermediate in the catalytic mechanism.

This sequence belongs to the radical SAM superfamily. RlmN family. [4Fe-4S] cluster is required as a cofactor.

Its subcellular location is the cytoplasm. It carries out the reaction adenosine(2503) in 23S rRNA + 2 reduced [2Fe-2S]-[ferredoxin] + 2 S-adenosyl-L-methionine = 2-methyladenosine(2503) in 23S rRNA + 5'-deoxyadenosine + L-methionine + 2 oxidized [2Fe-2S]-[ferredoxin] + S-adenosyl-L-homocysteine. The catalysed reaction is adenosine(37) in tRNA + 2 reduced [2Fe-2S]-[ferredoxin] + 2 S-adenosyl-L-methionine = 2-methyladenosine(37) in tRNA + 5'-deoxyadenosine + L-methionine + 2 oxidized [2Fe-2S]-[ferredoxin] + S-adenosyl-L-homocysteine. In terms of biological role, specifically methylates position 2 of adenine 2503 in 23S rRNA and position 2 of adenine 37 in tRNAs. m2A2503 modification seems to play a crucial role in the proofreading step occurring at the peptidyl transferase center and thus would serve to optimize ribosomal fidelity. This Phenylobacterium zucineum (strain HLK1) protein is Dual-specificity RNA methyltransferase RlmN.